The chain runs to 303 residues: Quinolinate synthase (303 aa).

Residues His-24 and Ser-41 each contribute to the iminosuccinate site. [4Fe-4S] cluster is bound at residue Cys-86. Iminosuccinate contacts are provided by residues 112 to 114 (YIN) and Ser-129. Cys-172 contributes to the [4Fe-4S] cluster binding site. Residues 198–200 (HPE) and Thr-215 contribute to the iminosuccinate site. Cys-260 serves as a coordination point for [4Fe-4S] cluster.

Belongs to the quinolinate synthase family. Type 2 subfamily. [4Fe-4S] cluster is required as a cofactor.

Its subcellular location is the cytoplasm. The catalysed reaction is iminosuccinate + dihydroxyacetone phosphate = quinolinate + phosphate + 2 H2O + H(+). The protein operates within cofactor biosynthesis; NAD(+) biosynthesis; quinolinate from iminoaspartate: step 1/1. Functionally, catalyzes the condensation of iminoaspartate with dihydroxyacetone phosphate to form quinolinate. The polypeptide is Quinolinate synthase (Caldicellulosiruptor bescii (strain ATCC BAA-1888 / DSM 6725 / KCTC 15123 / Z-1320) (Anaerocellum thermophilum)).